Consider the following 330-residue polypeptide: Putative zinc finger protein CONSTANS-LIKE 11 (330 aa).

Zn(2+)-binding residues include Cys-5, Cys-8, Cys-28, and His-33. Residues 5–47 form a B box-type 1; atypical zinc finger; it reads CDFCGTEKALIYCKSDSAKLCLNCDVNVHSANPLSQRHTRSLL. The segment at 48–88 adopts a B box-type 2; degenerate zinc-finger fold; that stretch reads CEKCSLQPTAVHCMNENVSLCQGCQWTASNCTGLGHRLQSL. Positions 276–318 constitute a CCT domain; sequence RDEAKKRYKQKKSKRMFGKQIRYASRKARADTRKRVKGRFVKS.

The protein belongs to the CONSTANS family.

The protein localises to the nucleus. The chain is Putative zinc finger protein CONSTANS-LIKE 11 (COL11) from Arabidopsis thaliana (Mouse-ear cress).